Here is a 396-residue protein sequence, read N- to C-terminus: GTPase Obg (396 aa).

An Obg domain is found at 1 to 159 (MKFVDEATIY…RNIRLELKVL (159 aa)). Positions 160-333 (ADVGLLGLPN…LCQDIMTWIE (174 aa)) constitute an OBG-type G domain. GTP-binding positions include 166–173 (GLPNAGKS), 191–195 (FTTLV), 213–216 (DIPG), 283–286 (NKTD), and 314–316 (SAL). 2 residues coordinate Mg(2+): Ser-173 and Thr-193. Disordered regions lie at residues 337-356 (EEER…REQM) and 373-396 (LARK…FYAP). Over residues 347–356 (EADRLNREQM) the composition is skewed to basic and acidic residues. Acidic residues predominate over residues 381-396 (SDDDDDDEDVEVFYAP).

It belongs to the TRAFAC class OBG-HflX-like GTPase superfamily. OBG GTPase family. As to quaternary structure, monomer. Requires Mg(2+) as cofactor.

The protein resides in the cytoplasm. Its function is as follows. An essential GTPase which binds GTP, GDP and possibly (p)ppGpp with moderate affinity, with high nucleotide exchange rates and a fairly low GTP hydrolysis rate. Plays a role in control of the cell cycle, stress response, ribosome biogenesis and in those bacteria that undergo differentiation, in morphogenesis control. The polypeptide is GTPase Obg (Hahella chejuensis (strain KCTC 2396)).